The chain runs to 420 residues: MNIFNNKLQEIDKGIFEIIKHEKTRQNSVIELIASENFVSPAVLEAQGSVLTNKYAEGYSGKRFYNGCEEVDKAENLAIERAKKLFNCKYANVQPHSGSQANQAVYLALMQPGDTVLGMSLDSGGHLTHGSTANMSGKWFNAVSYSVDKETYLIDYDEVERLAILHKPKLLIAGFSAYPRNLDFAKFREIADKVGAYLMADIAHIAGLVAAGEHQSPIPHAHIVTSTTNKTLRGPRGGLILSNDEEIGKKINSALFPGLQGGPLMHIIAAKAVAFLESLQPEYKSYIKQVIINAKALAGSLQERGYDILTGGTDNHIVLVDLRKDGITGKIAANSLDRAGITCNKNAIPFDKTSPFITSGIRLGTPACTTRGFKEKDFVLVGHLIADILDGLKNSEDNSKAEQKVLSEVTKLIKLFPFYD.

(6S)-5,6,7,8-tetrahydrofolate-binding positions include Leu121 and 125–127; that span reads GHL. An N6-(pyridoxal phosphate)lysine modification is found at Lys230. (6S)-5,6,7,8-tetrahydrofolate is bound by residues Glu246 and 354 to 356; that span reads SPF.

This sequence belongs to the SHMT family. In terms of assembly, homodimer. Requires pyridoxal 5'-phosphate as cofactor.

It is found in the cytoplasm. It carries out the reaction (6R)-5,10-methylene-5,6,7,8-tetrahydrofolate + glycine + H2O = (6S)-5,6,7,8-tetrahydrofolate + L-serine. It participates in one-carbon metabolism; tetrahydrofolate interconversion. Functionally, catalyzes the reversible interconversion of serine and glycine with tetrahydrofolate (THF) serving as the one-carbon carrier. This reaction serves as the major source of one-carbon groups required for the biosynthesis of purines, thymidylate, methionine, and other important biomolecules. The protein is Probable serine hydroxymethyltransferase of Rickettsia bellii (strain RML369-C).